A 302-amino-acid polypeptide reads, in one-letter code: Paired immunoglobulin-like type 2 receptor alpha (302 aa).

The first 31 residues, 1–31 (MALLISLPGGTPAMAQILLLLSSACLHAGNS), serve as a signal peptide directing secretion. The Extracellular segment spans residues 32–198 (ERSNRKNGFG…GGLDLQTTVG (167 aa)). N-linked (GlcNAc...) asparagine glycans are attached at residues Asn-90 and Asn-107. A helical transmembrane segment spans residues 199-219 (LATAAAVFLVGVLGLIVFLWW). The Cytoplasmic segment spans residues 220–302 (KRRRQGQKTK…ETVYSIVKAK (83 aa)). A compositionally biased stretch (basic and acidic residues) spans 228–248 (TKAEIPAREPLETSEKHESVG). Residues 228–293 (TKAEIPAREP…LPVHGNPQEE (66 aa)) form a disordered region. 2 consecutive short sequence motifs (ITIM motif) follow at residues 265–270 (IVYASI) and 294–299 (TVYSIV). Over residues 270–280 (ISLSSPTSPGT) the composition is skewed to polar residues.

As to quaternary structure, interacts with CD99. Post-translationally, phosphorylated on tyrosine residues.

The protein resides in the membrane. Functionally, paired receptors consist of highly related activating and inhibitory receptors and are widely involved in the regulation of the immune system. Receptor for CD99 and PIANP. This Mus musculus (Mouse) protein is Paired immunoglobulin-like type 2 receptor alpha (Pilra).